The following is a 261-amino-acid chain: Cytochrome c oxidase subunit 3 (261 aa).

The Mitochondrial matrix portion of the chain corresponds to 1 to 15 (MTHQTHAYHMVNPSP). The helical transmembrane segment at 16–34 (WPLTGALSALLMTSGLIMW) threads the bilayer. At 35-40 (FHFNST) the chain is on the mitochondrial intermembrane side. The helical transmembrane segment at 41-66 (ALLTLGLTTNMLTMYQWWRDVIREST) threads the bilayer. Topologically, residues 67-72 (FQGHHT) are mitochondrial matrix. A helical membrane pass occupies residues 73–105 (PAVQKGLRYGMILFIISEVLFFTGFFWAFYHSS). The Mitochondrial intermembrane portion of the chain corresponds to 106–128 (LAPTPELGGCWPPTGIHPLNPLE). Residues 129–152 (VPLLNTSVLLASGVSITWAHHSLM) traverse the membrane as a helical segment. The Mitochondrial matrix segment spans residues 153-155 (EGN). The chain crosses the membrane as a helical span at residues 156-183 (RYHMLQALFITIALGVYFTLLQASEYYE). Residues 184 to 190 (APFTISD) are Mitochondrial intermembrane-facing. The chain crosses the membrane as a helical span at residues 191–223 (GVYGSTFFVATGFHGLHVIIGSTFLIVCFFRQL). The Mitochondrial matrix segment spans residues 224-232 (KFHFTSSHH). Residues 233-256 (FGFEAAAWYWHFVDVVWLFLYMSI) form a helical membrane-spanning segment. Residues 257–261 (YWWGS) lie on the Mitochondrial intermembrane side of the membrane.

The protein belongs to the cytochrome c oxidase subunit 3 family. In terms of assembly, component of the cytochrome c oxidase (complex IV, CIV), a multisubunit enzyme composed of 14 subunits. The complex is composed of a catalytic core of 3 subunits MT-CO1, MT-CO2 and MT-CO3, encoded in the mitochondrial DNA, and 11 supernumerary subunits COX4I, COX5A, COX5B, COX6A, COX6B, COX6C, COX7A, COX7B, COX7C, COX8 and NDUFA4, which are encoded in the nuclear genome. The complex exists as a monomer or a dimer and forms supercomplexes (SCs) in the inner mitochondrial membrane with NADH-ubiquinone oxidoreductase (complex I, CI) and ubiquinol-cytochrome c oxidoreductase (cytochrome b-c1 complex, complex III, CIII), resulting in different assemblies (supercomplex SCI(1)III(2)IV(1) and megacomplex MCI(2)III(2)IV(2)).

Its subcellular location is the mitochondrion inner membrane. The enzyme catalyses 4 Fe(II)-[cytochrome c] + O2 + 8 H(+)(in) = 4 Fe(III)-[cytochrome c] + 2 H2O + 4 H(+)(out). Functionally, component of the cytochrome c oxidase, the last enzyme in the mitochondrial electron transport chain which drives oxidative phosphorylation. The respiratory chain contains 3 multisubunit complexes succinate dehydrogenase (complex II, CII), ubiquinol-cytochrome c oxidoreductase (cytochrome b-c1 complex, complex III, CIII) and cytochrome c oxidase (complex IV, CIV), that cooperate to transfer electrons derived from NADH and succinate to molecular oxygen, creating an electrochemical gradient over the inner membrane that drives transmembrane transport and the ATP synthase. Cytochrome c oxidase is the component of the respiratory chain that catalyzes the reduction of oxygen to water. Electrons originating from reduced cytochrome c in the intermembrane space (IMS) are transferred via the dinuclear copper A center (CU(A)) of subunit 2 and heme A of subunit 1 to the active site in subunit 1, a binuclear center (BNC) formed by heme A3 and copper B (CU(B)). The BNC reduces molecular oxygen to 2 water molecules using 4 electrons from cytochrome c in the IMS and 4 protons from the mitochondrial matrix. This Ovis aries (Sheep) protein is Cytochrome c oxidase subunit 3 (MT-CO3).